The chain runs to 628 residues: MAHAPEPDPAACDLGDERPKWDNKAQYLLSCTGFAVGLGNIWRFPYLCQTYGGGAFLIPYVIALVFEGIPIFHVELAIGQRLRKGSVGVWTAISPYLSGVGLGCVTLSFLISLYYNTIVAWVLWYLLNSFQHPLPWSSCPPDLNRTGFVEECQGSSAVSYFWYRQTLNITADINDSGSIQWWLLICLAASWAVVYMCVIRGIETTGKVIYFTALFPYLVLTIFLIRGLTLPGATKGLIYLFTPNMHILQNPRVWLDAATQIFFSLSLAFGGHIAFASYNSPRNDCQKDAVVIALVNRMTSLYASIAVFSVLGFKATNDYEHCLDRNILSLINDFDFPEQSISRDDYPAVLMHLNATWPKRVAQLPLKACLLEDFLDKSASGPGLAFVVFTETDLHMPGAPVWAMLFFGMLFTLGLSTMFGTVEAVITPLLDVGVLPRWVPKEALTGLVCLVCFLSATCFTLQSGNYWLEIFDNFAASPNLLMLAFLEVVGVVYVYGMKRFCDDIAWMTGRRPSPYWRLTWRVVSPLLLTIFVAYIILLFWKPLRYKAWNPKYELFPSRQEKLYPGWARAACVLLSLLPVLWVPVAALAQLLTRRRRTWRDRDARPDTDMRPDTDTRPDTDMRPDTDMR.

Residues 1–26 (MAHAPEPDPAACDLGDERPKWDNKAQ) lie on the Cytoplasmic side of the membrane. Residues 27–47 (YLLSCTGFAVGLGNIWRFPYL) traverse the membrane as a helical segment. The Extracellular portion of the chain corresponds to 48 to 51 (CQTY). The chain crosses the membrane as a helical span at residues 52–74 (GGGAFLIPYVIALVFEGIPIFHV). Topologically, residues 75–88 (ELAIGQRLRKGSVG) are cytoplasmic. Residues 89-111 (VWTAISPYLSGVGLGCVTLSFLI) form a helical membrane-spanning segment. At 112 to 178 (SLYYNTIVAW…ITADINDSGS (67 aa)) the chain is on the extracellular side. N-linked (GlcNAc...) asparagine glycosylation is found at Asn144, Asn168, and Asn174. The helical transmembrane segment at 179–201 (IQWWLLICLAASWAVVYMCVIRG) threads the bilayer. Topologically, residues 202–207 (IETTGK) are cytoplasmic. The chain crosses the membrane as a helical span at residues 208 to 230 (VIYFTALFPYLVLTIFLIRGLTL). Residues 231–253 (PGATKGLIYLFTPNMHILQNPRV) lie on the Extracellular side of the membrane. A helical transmembrane segment spans residues 254 to 276 (WLDAATQIFFSLSLAFGGHIAFA). The Cytoplasmic portion of the chain corresponds to 277-288 (SYNSPRNDCQKD). The helical transmembrane segment at 289-311 (AVVIALVNRMTSLYASIAVFSVL) threads the bilayer. The Extracellular portion of the chain corresponds to 312–399 (GFKATNDYEH…TETDLHMPGA (88 aa)). Asn354 carries N-linked (GlcNAc...) asparagine glycosylation. A helical transmembrane segment spans residues 400–422 (PVWAMLFFGMLFTLGLSTMFGTV). Over 423-442 (EAVITPLLDVGVLPRWVPKE) the chain is Cytoplasmic. The helical transmembrane segment at 443-465 (ALTGLVCLVCFLSATCFTLQSGN) threads the bilayer. The Extracellular portion of the chain corresponds to 466-474 (YWLEIFDNF). The chain crosses the membrane as a helical span at residues 475–497 (AASPNLLMLAFLEVVGVVYVYGM). The Cytoplasmic portion of the chain corresponds to 498–517 (KRFCDDIAWMTGRRPSPYWR). The helical transmembrane segment at 518-540 (LTWRVVSPLLLTIFVAYIILLFW) threads the bilayer. At 541–568 (KPLRYKAWNPKYELFPSRQEKLYPGWAR) the chain is on the extracellular side. The chain crosses the membrane as a helical span at residues 569–591 (AACVLLSLLPVLWVPVAALAQLL). Residues 592–628 (TRRRRTWRDRDARPDTDMRPDTDTRPDTDMRPDTDMR) lie on the Cytoplasmic side of the membrane. The tract at residues 602-628 (DARPDTDMRPDTDTRPDTDMRPDTDMR) is disordered.

It belongs to the sodium:neurotransmitter symporter (SNF) (TC 2.A.22) family. SLC6A18 subfamily. Abundantly expressed in kidney, but not in intestine.

Its subcellular location is the membrane. Does not show neutral amino acid transporter activity. This is Inactive sodium-dependent neutral amino acid transporter B(0)AT3 from Homo sapiens (Human).